The primary structure comprises 241 residues: Leucyl/phenylalanyl-tRNA--protein transferase (241 aa).

Belongs to the L/F-transferase family.

It localises to the cytoplasm. It catalyses the reaction N-terminal L-lysyl-[protein] + L-leucyl-tRNA(Leu) = N-terminal L-leucyl-L-lysyl-[protein] + tRNA(Leu) + H(+). It carries out the reaction N-terminal L-arginyl-[protein] + L-leucyl-tRNA(Leu) = N-terminal L-leucyl-L-arginyl-[protein] + tRNA(Leu) + H(+). The enzyme catalyses L-phenylalanyl-tRNA(Phe) + an N-terminal L-alpha-aminoacyl-[protein] = an N-terminal L-phenylalanyl-L-alpha-aminoacyl-[protein] + tRNA(Phe). Functionally, functions in the N-end rule pathway of protein degradation where it conjugates Leu, Phe and, less efficiently, Met from aminoacyl-tRNAs to the N-termini of proteins containing an N-terminal arginine or lysine. The polypeptide is Leucyl/phenylalanyl-tRNA--protein transferase (Neisseria meningitidis serogroup C / serotype 2a (strain ATCC 700532 / DSM 15464 / FAM18)).